The following is a 226-amino-acid chain: Calcium-binding protein 1 (226 aa).

Glycine 2 carries the N-myristoyl glycine lipid modification. A lipid anchor (S-palmitoyl cysteine) is attached at cysteine 4. 4 EF-hand domains span residues 81 to 116 (EEIE…MGYM), 135 to 152 (GHVD…KLLA), 158 to 193 (IGVK…LLGH), and 195 to 226 (VGHR…MMSR). Residues aspartate 94, aspartate 96, aspartate 98, tyrosine 100, and aspartate 105 each contribute to the Ca(2+) site. Aspartate 171, asparagine 173, aspartate 175, and glutamate 177 together coordinate Ca(2+). Serine 179 carries the post-translational modification Phosphoserine. The Ca(2+) site is built by glutamate 182, aspartate 208, asparagine 210, aspartate 212, arginine 214, and glutamate 219.

As to quaternary structure, homodimer. Interacts (via C-terminus) with ITPR1, ITPR2 and ITPR3. This binding is calcium dependent and the interaction correlates with calcium concentration. An additional calcium-independent interaction with the N-terminus of ITPR1 results in a decreased InsP(3) binding to the receptor. Interacts with CACNA1A (via C-terminal CDB motif) in the pre- and postsynaptic membranes. Interacts with CACNA1C (via C-terminal C and IQ motifs). Interacts with CACNA1D. The binding to the C motif is calcium independent whereas the binding to IQ requires the presence of calcium and is mutually exclusive with calmodulin binding. Interacts with TRPC5 (via C-terminus). Interacts (via EF-hands 1 and 2) at microtubules with MAP1LC3B. Interacts with MYO1C. Interacts (via EF-hands 1 and 2) with NSMF (via the central NLS-containing motif region), the interaction occurs in a calcium dependent manner after synaptic NMDA receptor stimulation and prevents nuclear import of NSMF. Interacts with SPACA9. Post-translationally, phosphorylated. The phosphorylation regulates the activity.

The protein resides in the cytoplasm. It is found in the cytoskeleton. The protein localises to the perinuclear region. It localises to the cell membrane. Its subcellular location is the golgi apparatus. The protein resides in the postsynaptic density. Functionally, modulates calcium-dependent activity of inositol 1,4,5-triphosphate receptors (ITPRs). Inhibits agonist-induced intracellular calcium signaling. Enhances inactivation and does not support calcium-dependent facilitation of voltage-dependent P/Q-type calcium channels. Causes calcium-dependent facilitation and inhibits inactivation of L-type calcium channels by binding to the same sites as calmodulin in the C-terminal domain of CACNA1C, but has an opposite effect on channel function. Suppresses the calcium-dependent inactivation of CACNA1D. Inhibits TRPC5 channels. Prevents NMDA receptor-induced cellular degeneration. Required for the normal transfer of light signals through the retina. This is Calcium-binding protein 1 (CABP1) from Bos taurus (Bovine).